Consider the following 303-residue polypeptide: Hemolysin E (303 aa).

A disulfide bridge links Cys87 with Cys285. Residues Ala179–Ala199 traverse the membrane as a helical segment.

This sequence belongs to the hemolysin E family. As to quaternary structure, monomer and oligomer. In periplasm, it is present as a monomer, while in outer membrane vesicles, it oligomerizes to form a pore structure that is active. The pore is formed by a dodecamer. In periplasm, it forms a disulfide bond, which prevents the oligomerization. In outer membrane vesicles, the redox status prevents formation of the disulfide bond, leading to oligomerization and pore formation.

It is found in the secreted. The protein resides in the periplasm. It localises to the host cell membrane. Toxin, which has some hemolytic activity towards mammalian cells. Acts by forming a pore-like structure upon contact with mammalian cells. The chain is Hemolysin E (hlyE) from Salmonella paratyphi A (strain ATCC 9150 / SARB42).